A 614-amino-acid polypeptide reads, in one-letter code: Two-component response regulator ORR33 (614 aa).

The Response regulatory domain occupies 14 to 139 (RVMIIDDDAK…VMARLWRVVA (126 aa)). Asp67 is modified (4-aspartylphosphate). The tract at residues 193-220 (RQLTINVVDDGNRGSGSGGGGGGGADAN) is disordered. Residues 205–217 (RGSGSGGGGGGGA) are compositionally biased toward gly residues.

This sequence belongs to the ARR family. Type-B subfamily. Post-translationally, two-component system major event consists of a His-to-Asp phosphorelay between a sensor histidine kinase (HK) and a response regulator (RR). In plants, the His-to-Asp phosphorelay involves an additional intermediate named Histidine-containing phosphotransfer protein (HPt). This multistep phosphorelay consists of a His-Asp-His-Asp sequential transfer of a phosphate group between first a His and an Asp of the HK protein, followed by the transfer to a conserved His of the HPt protein and finally the transfer to an Asp in the receiver domain of the RR protein.

In terms of biological role, functions as a response regulator involved in His-to-Asp phosphorelay signal transduction system. Phosphorylation of the Asp residue in the receiver domain activates the ability of the protein to promote the transcription of target genes. May directly activate some type-A response regulators in response to cytokinins. In Oryza sativa subsp. indica (Rice), this protein is Two-component response regulator ORR33.